Reading from the N-terminus, the 459-residue chain is Bifunctional protein GlmU (459 aa).

The pyrophosphorylase stretch occupies residues 1–230; sequence MSNRFAVILA…FDETLGVNDR (230 aa). UDP-N-acetyl-alpha-D-glucosamine contacts are provided by residues 9 to 12, Lys23, Gln73, and 78 to 79; these read LAAG and GT. Asp103 lines the Mg(2+) pocket. The UDP-N-acetyl-alpha-D-glucosamine site is built by Gly140, Glu155, Asn170, and Asn228. Asn228 contributes to the Mg(2+) binding site. Residues 231 to 251 form a linker region; it reads VALSQAEIIMKNRINRKNMVN. The tract at residues 252–459 is N-acetyltransferase; it reads GVTIIDPSNT…VDQLLNKKKS (208 aa). UDP-N-acetyl-alpha-D-glucosamine contacts are provided by Arg333 and Lys351. His363 acts as the Proton acceptor in catalysis. UDP-N-acetyl-alpha-D-glucosamine contacts are provided by Tyr366 and Asn377. Acetyl-CoA contacts are provided by residues 386–387, Ala423, and Arg440; that span reads NY.

It in the N-terminal section; belongs to the N-acetylglucosamine-1-phosphate uridyltransferase family. In the C-terminal section; belongs to the transferase hexapeptide repeat family. As to quaternary structure, homotrimer. Mg(2+) serves as cofactor.

The protein resides in the cytoplasm. It carries out the reaction alpha-D-glucosamine 1-phosphate + acetyl-CoA = N-acetyl-alpha-D-glucosamine 1-phosphate + CoA + H(+). The catalysed reaction is N-acetyl-alpha-D-glucosamine 1-phosphate + UTP + H(+) = UDP-N-acetyl-alpha-D-glucosamine + diphosphate. It participates in nucleotide-sugar biosynthesis; UDP-N-acetyl-alpha-D-glucosamine biosynthesis; N-acetyl-alpha-D-glucosamine 1-phosphate from alpha-D-glucosamine 6-phosphate (route II): step 2/2. The protein operates within nucleotide-sugar biosynthesis; UDP-N-acetyl-alpha-D-glucosamine biosynthesis; UDP-N-acetyl-alpha-D-glucosamine from N-acetyl-alpha-D-glucosamine 1-phosphate: step 1/1. Its pathway is bacterial outer membrane biogenesis; LPS lipid A biosynthesis. Its function is as follows. Catalyzes the last two sequential reactions in the de novo biosynthetic pathway for UDP-N-acetylglucosamine (UDP-GlcNAc). The C-terminal domain catalyzes the transfer of acetyl group from acetyl coenzyme A to glucosamine-1-phosphate (GlcN-1-P) to produce N-acetylglucosamine-1-phosphate (GlcNAc-1-P), which is converted into UDP-GlcNAc by the transfer of uridine 5-monophosphate (from uridine 5-triphosphate), a reaction catalyzed by the N-terminal domain. The polypeptide is Bifunctional protein GlmU (Bacillus cereus (strain AH187)).